The following is a 649-amino-acid chain: Acetyl-coenzyme A synthetase (649 aa).

Residues arginine 189–lysine 192, threonine 311, and asparagine 335 contribute to the CoA site. Residues glycine 387–proline 389, aspartate 411–threonine 416, aspartate 500, and arginine 515 contribute to the ATP site. Position 523 (serine 523) interacts with CoA. Arginine 526 serves as a coordination point for ATP. Mg(2+) contacts are provided by valine 537, histidine 539, and valine 542. Residue arginine 584 coordinates CoA. Residue lysine 609 is modified to N6-acetyllysine.

Belongs to the ATP-dependent AMP-binding enzyme family. It depends on Mg(2+) as a cofactor. Post-translationally, acetylated. Deacetylation by the SIR2-homolog deacetylase activates the enzyme.

The enzyme catalyses acetate + ATP + CoA = acetyl-CoA + AMP + diphosphate. Catalyzes the conversion of acetate into acetyl-CoA (AcCoA), an essential intermediate at the junction of anabolic and catabolic pathways. AcsA undergoes a two-step reaction. In the first half reaction, AcsA combines acetate with ATP to form acetyl-adenylate (AcAMP) intermediate. In the second half reaction, it can then transfer the acetyl group from AcAMP to the sulfhydryl group of CoA, forming the product AcCoA. In Rhizobium meliloti (strain 1021) (Ensifer meliloti), this protein is Acetyl-coenzyme A synthetase.